We begin with the raw amino-acid sequence, 384 residues long: 8-amino-7-oxononanoate synthase (384 aa).

Substrate is bound at residue Arg21. Pyridoxal 5'-phosphate is bound at residue 108-109 (GF). His133 contacts substrate. Residues Ser179, His207, and Thr233 each contribute to the pyridoxal 5'-phosphate site. An N6-(pyridoxal phosphate)lysine modification is found at Lys236. Residue Thr352 participates in substrate binding.

It belongs to the class-II pyridoxal-phosphate-dependent aminotransferase family. BioF subfamily. Homodimer. It depends on pyridoxal 5'-phosphate as a cofactor.

It carries out the reaction 6-carboxyhexanoyl-[ACP] + L-alanine + H(+) = (8S)-8-amino-7-oxononanoate + holo-[ACP] + CO2. The protein operates within cofactor biosynthesis; biotin biosynthesis. Functionally, catalyzes the decarboxylative condensation of pimeloyl-[acyl-carrier protein] and L-alanine to produce 8-amino-7-oxononanoate (AON), [acyl-carrier protein], and carbon dioxide. In Escherichia coli O7:K1 (strain IAI39 / ExPEC), this protein is 8-amino-7-oxononanoate synthase.